We begin with the raw amino-acid sequence, 148 residues long: Large ribosomal subunit protein uL11 (148 aa).

This sequence belongs to the universal ribosomal protein uL11 family. In terms of assembly, part of the ribosomal stalk of the 50S ribosomal subunit. Interacts with L10 and the large rRNA to form the base of the stalk. L10 forms an elongated spine to which L12 dimers bind in a sequential fashion forming a multimeric L10(L12)X complex. In terms of processing, one or more lysine residues are methylated.

Its function is as follows. Forms part of the ribosomal stalk which helps the ribosome interact with GTP-bound translation factors. The polypeptide is Large ribosomal subunit protein uL11 (Myxococcus xanthus (strain DK1622)).